The following is a 285-amino-acid chain: Bifunctional protein FolD (285 aa).

NADP(+) is bound by residues 169–171 (GRS), Ser194, and Ile235.

Belongs to the tetrahydrofolate dehydrogenase/cyclohydrolase family. In terms of assembly, homodimer.

It carries out the reaction (6R)-5,10-methylene-5,6,7,8-tetrahydrofolate + NADP(+) = (6R)-5,10-methenyltetrahydrofolate + NADPH. It catalyses the reaction (6R)-5,10-methenyltetrahydrofolate + H2O = (6R)-10-formyltetrahydrofolate + H(+). It participates in one-carbon metabolism; tetrahydrofolate interconversion. Catalyzes the oxidation of 5,10-methylenetetrahydrofolate to 5,10-methenyltetrahydrofolate and then the hydrolysis of 5,10-methenyltetrahydrofolate to 10-formyltetrahydrofolate. The polypeptide is Bifunctional protein FolD (Microcystis aeruginosa (strain NIES-843 / IAM M-2473)).